The chain runs to 93 residues: uncharacterized protein (93 aa).

A signal peptide spans Met-1–Gly-11. A lipid anchor (N-palmitoyl cysteine) is attached at Cys-12. Cys-12 carries S-diacylglycerol cysteine lipidation.

Its subcellular location is the cell membrane. This is an uncharacterized protein from Escherichia coli O6:K15:H31 (strain 536 / UPEC).